The sequence spans 985 residues: Serine/threonine-protein kinase N2 (985 aa).

An REM-1 1 domain is found at 33–109; that stretch reads KLDFSDTIVQ…LQELNAHIVV (77 aa). Position 77 is an N6-acetyllysine (Lys77). Residue Ser110 is modified to Phosphoserine. The disordered stretch occupies residues 111–136; it reads DPEDYTDCPRTPDTPNSDSRSSTSNN. 2 positions are modified to phosphothreonine: Thr121 and Thr124. The span at 121 to 136 shows a compositional bias: low complexity; it reads TPDTPNSDSRSSTSNN. REM-1 domains follow at residues 121–204 and 207–286; these read TPDT…TNEL and DNAK…ELPK. Ser303, Ser307, Ser361, and Ser363 each carry phosphoserine. Positions 352–383 are disordered; it reads ATSVALPGWSPSENRSSFMSRTSKSKSGSSRN. Positions 354-474 constitute a C2 domain; sequence SVALPGWSPS…LYLEPQGTLF (121 aa). The span at 366–382 shows a compositional bias: low complexity; the sequence is RSSFMSRTSKSKSGSSR. A necessary to rescue apical junction formation region spans residues 383–464; the sequence is NLLKTDDLSN…FLDNQRHGMA (82 aa). Phosphoserine is present on residues Ser536, Ser584, Ser621, and Ser632. The disordered stretch occupies residues 570 to 590; the sequence is DLEPEAPPAPPRASSLGEIDD. Positions 658 to 917 constitute a Protein kinase domain; that stretch reads FRCCAVLGRG…AEDVKKHPFF (260 aa). Residues 664–672 and Lys687 contribute to the ATP site; that span reads LGRGHFGKV. Asp783 serves as the catalytic Proton acceptor. Thr817 bears the Phosphothreonine; by PDPK1 mark. The necessary for the catalytic activity stretch occupies residues 918 to 978; that stretch reads RLTDWSALLD…EEEQEMFRDF (61 aa). The 68-residue stretch at 918 to 985 folds into the AGC-kinase C-terminal domain; the sequence is RLTDWSALLD…RDFDYVADWC (68 aa). Residue Ser953 is modified to Phosphoserine. A Phosphothreonine modification is found at Thr959. Positions 979-985 are negatively regulates the responsiveness of the catalytic activity by cardiolipin and is required for optimal activation by the GTP-bound RhoA; that stretch reads DYVADWC.

The protein belongs to the protein kinase superfamily. AGC Ser/Thr protein kinase family. PKC subfamily. As to quaternary structure, interacts (via the REM repeats) with RHOA (GTP-bound form preferentially) and interacts (via the REM repeats) with RAC1 (GTP-bound form preferentially); the interactions induce its autophosphorylation. Interacts with RHOC. Interacts with NCK1 (via SH3 domains) and NCK2. Interacts with CD44. Interacts (via C-terminal kinase domain) with PDPK1; the interaction stimulates PDPK1 kinase activity. Interacts with MAP3K2; the interaction activates PRK2 kinase activity in a MAP3K2-independent kinase activity. Interacts (via C-terminal domain) with AKT1; the interaction occurs with the C-terminal cleavage product of PRK2 in apoptotic cells. Interacts (via C-terminus) with PTPN13 (via PDZ 3 domain). Interacts with CDK10. Post-translationally, phosphorylated during mitosis. Autophosphorylated. Phosphorylated. Binding to Rho and Rac promotes autophosphorylation and phosphorylation on serine and threonine residues. Phosphorylated by CDK10. Proteolytically cleaved by caspase-3 during the induction of apoptotic cell death. Activated by limited proteolysis with trypsin. As to expression, expressed in liver (at protein level).

Its subcellular location is the cytoplasm. The protein resides in the nucleus. The protein localises to the membrane. It localises to the cell projection. It is found in the lamellipodium. Its subcellular location is the cytoskeleton. The protein resides in the cleavage furrow. The protein localises to the midbody. It localises to the cell junction. The catalysed reaction is L-seryl-[protein] + ATP = O-phospho-L-seryl-[protein] + ADP + H(+). It catalyses the reaction L-threonyl-[protein] + ATP = O-phospho-L-threonyl-[protein] + ADP + H(+). Kinase activity is activated upon binding to GTP-bound Rho1/Rac1 GTPases. Activated by caspase-3 (CASP3) cleavage during apoptosis. Activated by lipids, particularly cardiolipin and to a lesser extent by other acidic phospholipids and unsaturated fatty acids. Two specific sites, Thr-817 (activation loop of the kinase domain) and Thr-959 (turn motif), need to be phosphorylated for its full activation. In terms of biological role, PKC-related serine/threonine-protein kinase and Rho/Rac effector protein that participates in specific signal transduction responses in the cell. Plays a role in the regulation of cell cycle progression, actin cytoskeleton assembly, cell migration, cell adhesion, tumor cell invasion and transcription activation signaling processes. Phosphorylates CTTN in hyaluronan-induced astrocytes and hence decreases CTTN ability to associate with filamentous actin. Phosphorylates HDAC5, therefore lead to impair HDAC5 import. Direct RhoA target required for the regulation of the maturation of primordial junctions into apical junction formation in bronchial epithelial cells. Required for G2/M phases of the cell cycle progression and abscission during cytokinesis in a ECT2-dependent manner. Stimulates FYN kinase activity that is required for establishment of skin cell-cell adhesion during keratinocytes differentiation. Regulates epithelial bladder cells speed and direction of movement during cell migration and tumor cell invasion. Inhibits Akt pro-survival-induced kinase activity. Mediates Rho protein-induced transcriptional activation via the c-fos serum response factor (SRF). Involved in the negative regulation of ciliogenesis. The polypeptide is Serine/threonine-protein kinase N2 (Pkn2) (Rattus norvegicus (Rat)).